We begin with the raw amino-acid sequence, 293 residues long: Putative phosphoenolpyruvate synthase regulatory protein (293 aa).

173-180 (GVSRCGKT) provides a ligand contact to ADP.

It belongs to the pyruvate, phosphate/water dikinase regulatory protein family. PSRP subfamily.

It carries out the reaction [pyruvate, water dikinase] + ADP = [pyruvate, water dikinase]-phosphate + AMP + H(+). It catalyses the reaction [pyruvate, water dikinase]-phosphate + phosphate + H(+) = [pyruvate, water dikinase] + diphosphate. Functionally, bifunctional serine/threonine kinase and phosphorylase involved in the regulation of the phosphoenolpyruvate synthase (PEPS) by catalyzing its phosphorylation/dephosphorylation. This is Putative phosphoenolpyruvate synthase regulatory protein from Photorhabdus laumondii subsp. laumondii (strain DSM 15139 / CIP 105565 / TT01) (Photorhabdus luminescens subsp. laumondii).